The primary structure comprises 423 residues: Galactosylceramide sulfotransferase (423 aa).

Residues 1–14 (MLPPQKKPWESMAK) lie on the Cytoplasmic side of the membrane. A helical; Signal-anchor for type II membrane protein membrane pass occupies residues 15 to 35 (GLVLGALFTSFLLLVYSYAVP). Over 36 to 423 (PLHAGLASTT…WKFIRDFLRW (388 aa)) the chain is Lumenal. N-linked (GlcNAc...) asparagine glycans are attached at residues Asn-66 and Asn-312.

The protein belongs to the galactose-3-O-sulfotransferase family. As to expression, expressed in kidney proximal tubule, gastric mucosa and adenocarcinoma. Highly expressed in renal cell carcinoma cell lines.

Its subcellular location is the golgi apparatus membrane. The catalysed reaction is a beta-D-galactosyl-(1&lt;-&gt;1')-N-acylsphing-4-enine + 3'-phosphoadenylyl sulfate = an N-acyl-1-beta-D-(3-O-sulfo)-galactosyl-sphing-4-enine + adenosine 3',5'-bisphosphate + H(+). The enzyme catalyses a 1-O-alkyl-2-acyl-3-O-(beta-D-galactosyl)-sn-glycerol + 3'-phosphoadenylyl sulfate = a 1-O-alkyl-2-acyl-3-(beta-D-3-sulfogalactosyl)-sn-glycerol + adenosine 3',5'-bisphosphate + H(+). It carries out the reaction a beta-D-Gal-(1&lt;-&gt;1')-ceramide + 3'-phosphoadenylyl sulfate = 1-(3-O-sulfo-beta-D-galactosyl)-ceramide + adenosine 3',5'-bisphosphate + H(+). It catalyses the reaction a 1,2-diacyl-3-O-(beta-D-galactosyl)-sn-glycerol + 3'-phosphoadenylyl sulfate = 1,2-diacyl-3-(3-O-sulfo-beta-D-galactosyl)-sn-glycerol + adenosine 3',5'-bisphosphate + H(+). The catalysed reaction is a beta-D-Gal-(1-&gt;4)-beta-D-Glc-(1&lt;-&gt;1)-Cer(d18:1(4E)) + 3'-phosphoadenylyl sulfate = beta-D-3-sulfogalactosyl-(1-&gt;4)-beta-D-glucosyl-(1&lt;-&gt;1')-N-acylsphing-4-enine + adenosine 3',5'-bisphosphate + H(+). It functions in the pathway lipid metabolism; sphingolipid metabolism. Catalyzes the transfer of a sulfate group to position 3 of non-reducing beta-galactosyl residues in glycerolipids and sphingolipids, therefore participates in the biosynthesis of sulfoglycolipids. Catalyzes the synthesis of galactosylceramide sulfate (sulfatide), a major lipid component of the myelin sheath and of monogalactosylalkylacylglycerol sulfate (seminolipid), present in spermatocytes. Seems to prefer beta-glycosides at the non-reducing termini of sugar chains attached to a lipid moiety. Also acts on lactosylceramide, galactosyl 1-alkyl-2-sn-glycerol and galactosyl diacylglycerol (in vitro). The chain is Galactosylceramide sulfotransferase from Homo sapiens (Human).